A 377-amino-acid polypeptide reads, in one-letter code: Caspase-4 (377 aa).

The interval 1 to 59 (MAEDKHNKNPLKMLESLGKELISGLLDDFVEKNVLKLEEEEKKKIYDAKLQDKARVLVD) is required for LPS-binding. A propeptide spanning residues 1-80 (MAEDKHNKNP…VFVQTFLNID (80 aa)) is cleaved from the precursor. Positions 1–91 (MAEDKHNKNP…NSTSIKAPEE (91 aa)) constitute a CARD domain. A Phosphoserine modification is found at serine 83. Catalysis depends on residues histidine 210 and cysteine 258. A propeptide spanning residues 271–289 (SPPALADSFSQSSENLEED) is cleaved from the precursor.

It belongs to the peptidase C14A family. Heterotetramer that consists of two anti-parallel arranged heterodimers, each one formed by a 20 kDa (Caspase-4 subunit p20) and a 10 kDa (Caspase-4 subunit p10) subunit. Upon direct LPS-binding, forms large homooligomers, resulting in its activation. These oligomers are often referred to as 'non-canonical inflammasomes'. In its precursor form, interacts with TMEM214; this interaction is required for association with the endoplasmic reticulum membrane. Interacts with CASP1. Interacts with NOD2. Interacts with Serpinb1a, Serpinb1b and Serpinb1c; these interactions regulate CASP4 activity. As to quaternary structure, heterotetramer that consists of two anti-parallel arranged heterodimers, each one formed by a 20 kDa (Caspase-4 subunit p20) and a 10 kDa (Caspase-4 subunit p10) subunit. In terms of processing, in response to activation signals, undergoes autoproteolytic cleavage and activation.

It localises to the cytoplasm. It is found in the cytosol. Its subcellular location is the endoplasmic reticulum membrane. The protein resides in the mitochondrion. The protein localises to the inflammasome. It localises to the secreted. The catalysed reaction is Strict requirement for Asp at the P1 position. It has a preferred cleavage sequence of Tyr-Val-Ala-Asp-|- but also cleaves at Asp-Glu-Val-Asp-|-.. With respect to regulation, activated by homooligomerization induced by direct binding to cytosolic LPS, in a TLR4-independent manner. In addition to LPS, CASP4/CASP11 may also be activated by oxidized phospholipid 1-palmitoyl-2-arachidonoyl- sn-glycero-3-phosphorylcholine, an oxidized phospholipid (oxPAPC), in dendritic cells, promoting adaptive immunity. The role of oxPAPC is however unclear and another report suggests that oxPAPC competes with LPS-binding and inhibits the non-canonical inflammasome in macrophages. In terms of biological role, inflammatory caspase that acts as the effector of the non-canonical inflammasome by mediating lipopolysaccharide (LPS)-induced pyroptosis. Also indirectly activates the NLRP3 and NLRP6 inflammasomes. Acts as a thiol protease that cleaves a tetrapeptide after an Asp residue at position P1: catalyzes cleavage of CGAS, GSDMD and IL18. Effector of the non-canonical inflammasome independently of NLRP3 inflammasome and CASP1: the non-canonical inflammasome promotes pyroptosis through GSDMD cleavage without involving secretion of cytokine IL1B. In the non-canonical inflammasome, CASP4 is activated by direct binding to the lipid A moiety of LPS without the need of an upstream sensor. LPS-binding promotes CASP4 activation and CASP4-mediated cleavage of GSDMD and IL18, followed by IL18 secretion through the GSDMD pore, pyroptosis of infected cells and their extrusion into the gut lumen. Also indirectly promotes secretion of mature cytokines (IL1A and HMGB1) downstream of GSDMD-mediated pyroptosis via activation of the NLRP3 and NLRP6 inflammasomes. Involved in NLRP3-dependent CASP1 activation and IL1B secretion in response to non-canonical activators, such as UVB radiation or cholera enterotoxin. Involved in NLRP6 inflammasome-dependent activation in response to lipoteichoic acid (LTA), a cell-wall component of Gram-positive bacteria, which leads to CASP1 activation and IL1B secretion. Involved in LPS-induced IL6 secretion; this activity may not require caspase enzymatic activity. The non-canonical inflammasome is required for innate immunity to cytosolic, but not vacuolar, bacteria. Plays a crucial role in the restriction of S.typhimurium replication in colonic epithelial cells during infection. Pyroptosis limits bacterial replication, while cytokine secretion promotes the recruitment and activation of immune cells and triggers mucosal inflammation. May also act as an activator of adaptive immunity in dendritic cells, following activation by oxidized phospholipid 1-palmitoyl-2-arachidonoyl- sn-glycero-3-phosphorylcholine, an oxidized phospholipid (oxPAPC). Cleavage of GSDMD is not strictly dependent on the consensus cleavage site but depends on an exosite interface on CASP4 that recognizes and binds the Gasdermin-D, C-terminal (GSDMD-CT) part. Catalyzes cleavage and maturation of IL18; IL18 processing also depends of the exosite interface on CASP4. In contrast, it does not directly process IL1B. During non-canonical inflammasome activation, cuts CGAS and may play a role in the regulation of antiviral innate immune activation. The sequence is that of Caspase-4 (CASP4) from Bos taurus (Bovine).